Reading from the N-terminus, the 503-residue chain is Glucose-6-phosphate 1-dehydrogenase (503 aa).

NADP(+) contacts are provided by residues 14 to 21 (GASGDLSK), arginine 49, and lysine 158. Residues lysine 158, 188–192 (HYLGK), glutamate 226, and aspartate 245 each bind D-glucose 6-phosphate. Histidine 250 functions as the Proton acceptor in the catalytic mechanism. Lysine 341 contacts NADP(+). Lysine 344 provides a ligand contact to D-glucose 6-phosphate. The NADP(+) site is built by lysine 350, arginine 354, and arginine 376. Glutamine 378 serves as a coordination point for D-glucose 6-phosphate. Residues 384 to 386 (YLK), arginine 471, and tyrosine 487 each bind NADP(+).

It belongs to the glucose-6-phosphate dehydrogenase family.

The enzyme catalyses D-glucose 6-phosphate + NADP(+) = 6-phospho-D-glucono-1,5-lactone + NADPH + H(+). It functions in the pathway carbohydrate degradation; pentose phosphate pathway; D-ribulose 5-phosphate from D-glucose 6-phosphate (oxidative stage): step 1/3. Functionally, catalyzes the rate-limiting step of the oxidative pentose-phosphate pathway, which represents a route for the dissimilation of carbohydrates besides glycolysis. The main function of this enzyme is to provide reducing power (NADPH) and pentose phosphates for fatty acid and nucleic acid synthesis. The G6PDH activity is required to cope with hydrogen peroxide and potassium bisulfite stresses and plays a role in adaptation to conditions used in wine fermentations. The protein is Glucose-6-phosphate 1-dehydrogenase of Hanseniaspora uvarum (Yeast).